A 355-amino-acid polypeptide reads, in one-letter code: Small ribosomal subunit biogenesis GTPase RsgA 1 (355 aa).

Positions 103-262 constitute a CP-type G domain; the sequence is GRVADRQAIA…LIDTPGVREF (160 aa). GTP contacts are provided by residues 152–155 and 204–212; these read NKAD and GSSGVGKSS. 4 residues coordinate Zn(2+): C285, C290, H292, and C298.

This sequence belongs to the TRAFAC class YlqF/YawG GTPase family. RsgA subfamily. As to quaternary structure, monomer. Associates with 30S ribosomal subunit, binds 16S rRNA. Zn(2+) serves as cofactor.

It is found in the cytoplasm. In terms of biological role, one of several proteins that assist in the late maturation steps of the functional core of the 30S ribosomal subunit. Helps release RbfA from mature subunits. May play a role in the assembly of ribosomal proteins into the subunit. Circularly permuted GTPase that catalyzes slow GTP hydrolysis, GTPase activity is stimulated by the 30S ribosomal subunit. In Bacteroides thetaiotaomicron (strain ATCC 29148 / DSM 2079 / JCM 5827 / CCUG 10774 / NCTC 10582 / VPI-5482 / E50), this protein is Small ribosomal subunit biogenesis GTPase RsgA 1.